We begin with the raw amino-acid sequence, 174 residues long: Large ribosomal subunit protein uL22 (174 aa).

Belongs to the universal ribosomal protein uL22 family. In terms of assembly, part of the 50S ribosomal subunit.

Its function is as follows. This protein binds specifically to 23S rRNA. It makes multiple contacts with different domains of the 23S rRNA in the assembled 50S subunit and ribosome. In terms of biological role, the globular domain of the protein is located near the polypeptide exit tunnel on the outside of the subunit, while an extended beta-hairpin is found that lines the wall of the exit tunnel in the center of the 70S ribosome. This is Large ribosomal subunit protein uL22 from Nanoarchaeum equitans (strain Kin4-M).